A 591-amino-acid polypeptide reads, in one-letter code: L-fucose isomerase (591 aa).

Catalysis depends on proton acceptor residues glutamate 337 and aspartate 361. Residues glutamate 337, aspartate 361, and histidine 528 each coordinate Mn(2+).

This sequence belongs to the L-fucose isomerase family. In terms of assembly, homohexamer. Mn(2+) is required as a cofactor.

The protein localises to the cytoplasm. The catalysed reaction is L-fucose = L-fuculose. It functions in the pathway carbohydrate degradation; L-fucose degradation; L-lactaldehyde and glycerone phosphate from L-fucose: step 1/3. Its function is as follows. Converts the aldose L-fucose into the corresponding ketose L-fuculose. The protein is L-fucose isomerase of Escherichia coli (strain 55989 / EAEC).